The sequence spans 915 residues: Mitogen-activated protein kinase kinae kinase MST11 (915 aa).

3 disordered regions span residues methionine 1–tryptophan 65, lysine 134–valine 171, and glycine 183–aspartate 249. Over residues alanine 26–serine 45 the composition is skewed to low complexity. Residues tryptophan 65–lysine 128 form the SAM domain. Low complexity-rich tracts occupy residues serine 152–serine 163 and proline 188–serine 203. The region spanning asparagine 263 to alanine 353 is the Ras-associating domain. Residues tryptophan 641–leucine 911 enclose the Protein kinase domain. ATP contacts are provided by residues isoleucine 647–valine 655 and lysine 670.

The protein belongs to the protein kinase superfamily. STE Ser/Thr protein kinase family. MAP kinase kinase kinase subfamily. In terms of assembly, interacts with the adapter protein MST50.

It catalyses the reaction L-seryl-[protein] + ATP = O-phospho-L-seryl-[protein] + ADP + H(+). It carries out the reaction L-threonyl-[protein] + ATP = O-phospho-L-threonyl-[protein] + ADP + H(+). Functionally, mitogen-activated protein kinase kinase kinase; part of the MST11-MST7-PMK1 MAP kinase (MAPK) cascade that is essential for appressorium formation, penetration and invasive growth. The MST11-MST7-PMK1 MAP kinase cascade transduces signals from the cell surface sensors MDB2 and SHO1 that recognize various surface signals such as surface hydrophobicity, cutin monomers, and rice leaf waxes. MST11 acts as the upstream MAPKKK that directly phosphorylates MAPKK MST7. MST11 but not MST7 may also be involved in the OSM1 MAPK pathway in response to osmotic stresses. This chain is Mitogen-activated protein kinase kinae kinase MST11, found in Pyricularia oryzae (strain 70-15 / ATCC MYA-4617 / FGSC 8958) (Rice blast fungus).